Reading from the N-terminus, the 209-residue chain is ATP-dependent Clp protease proteolytic subunit (209 aa).

S111 (nucleophile) is an active-site residue. H136 is an active-site residue.

It belongs to the peptidase S14 family. As to quaternary structure, fourteen ClpP subunits assemble into 2 heptameric rings which stack back to back to give a disk-like structure with a central cavity, resembling the structure of eukaryotic proteasomes.

The protein resides in the cytoplasm. It carries out the reaction Hydrolysis of proteins to small peptides in the presence of ATP and magnesium. alpha-casein is the usual test substrate. In the absence of ATP, only oligopeptides shorter than five residues are hydrolyzed (such as succinyl-Leu-Tyr-|-NHMec, and Leu-Tyr-Leu-|-Tyr-Trp, in which cleavage of the -Tyr-|-Leu- and -Tyr-|-Trp bonds also occurs).. Its function is as follows. Cleaves peptides in various proteins in a process that requires ATP hydrolysis. Has a chymotrypsin-like activity. Plays a major role in the degradation of misfolded proteins. This is ATP-dependent Clp protease proteolytic subunit from Dechloromonas aromatica (strain RCB).